The following is a 103-amino-acid chain: Small ribosomal subunit protein uS10 (103 aa).

It belongs to the universal ribosomal protein uS10 family. As to quaternary structure, part of the 30S ribosomal subunit.

Involved in the binding of tRNA to the ribosomes. In Actinobacillus pleuropneumoniae serotype 5b (strain L20), this protein is Small ribosomal subunit protein uS10.